The chain runs to 1911 residues: Adenylate kinase 9 (1911 aa).

Positions 31–285 are adenylate kinase 1; that stretch reads VCFVVFGKPG…LFMIVMDRLK (255 aa). ATP is bound at residue 40–45; that stretch reads GVGKTT. The interval 60-89 is NMP 1; it reads EALPILEEQIAAETESGVMLQSMLISGQSI. AMP-binding positions include 87–89 and 116–119; these read QSI and EIPS. Residues 160–205 are LID 1; it reads GQRQHNNTGYIYSRDQWDPEVIENHRKKKKEAQKDGKGEEEEEEEE. A disordered region spans residues 185–210; that stretch reads RKKKKEAQKDGKGEEEEEEEEQEEEE. The segment covering 197-210 has biased composition (acidic residues); it reads GEEEEEEEEQEEEE. Arg-229 contributes to the AMP binding site. Coiled-coil stretches lie at residues 443-485 and 676-711; these read AEAT…EFGV and LQKK…TEEE. 2 disordered regions span residues 728–796 and 892–926; these read KAKE…TEIP and DYEE…KERK. A compositionally biased stretch (acidic residues) spans 733-750; it reads EETDNEDEEEIEGDELEV. The span at 751–761 shows a compositional bias: basic and acidic residues; that stretch reads HEEPEASHDTR. 2 stretches are compositionally biased toward acidic residues: residues 767 to 791 and 892 to 919; these read EEFE…ETTV and DYEE…EEGE. Adenylate kinase stretches follow at residues 992-1203 and 1412-1601; these read LRIC…ELIL and IRII…KNVQ. 1001-1006 contributes to the ATP binding site; that stretch reads GSGKTM. An NMP 2 region spans residues 1021–1052; that stretch reads QFEEVLQEKLLLKTEKKVGPEFEEDSENEQAA. Residues 1050-1052 and 1079-1082 contribute to the AMP site; these read QAA and VQLT. The LID 2 stretch occupies residues 1124–1144; sequence DGFPRYPEEAQFLGDRGFFPD. 1421 to 1426 provides a ligand contact to ATP; that stretch reads KSGKTT. The tract at residues 1441–1472 is NMP 3; that stretch reads SIGGALRYVLNNHPETELALMLNWHLHKGMTA. AMP is bound by residues Arg-1447, 1470-1472, 1499-1502, Gln-1506, and Arg-1543; these read MTA and GYPV. The interval 1536 to 1550 is LID 3; sequence LEKENEQRLPYPLHN.

The protein belongs to the adenylate kinase family.

The protein resides in the cytoplasm. It localises to the nucleus. The protein localises to the cell projection. Its subcellular location is the cilium. It is found in the flagellum. It catalyses the reaction a ribonucleoside 5'-phosphate + ATP = a ribonucleoside 5'-diphosphate + ADP. The enzyme catalyses AMP + ATP = 2 ADP. It carries out the reaction GTP + AMP = GDP + ADP. The catalysed reaction is CMP + ATP = CDP + ADP. It catalyses the reaction GTP + CMP = CDP + GDP. The enzyme catalyses dAMP + ATP = dADP + ADP. It carries out the reaction dCMP + ATP = dCDP + ADP. The catalysed reaction is a ribonucleoside 5'-diphosphate + ATP = a ribonucleoside 5'-triphosphate + ADP. It catalyses the reaction CDP + ATP = CTP + ADP. The enzyme catalyses CDP + GTP = CTP + GDP. It carries out the reaction GDP + ATP = GTP + ADP. The catalysed reaction is UDP + ATP = UTP + ADP. It catalyses the reaction GTP + UDP = UTP + GDP. The enzyme catalyses dTDP + GTP = dTTP + GDP. It carries out the reaction dCDP + ATP = dCTP + ADP. The catalysed reaction is dCDP + GTP = dCTP + GDP. It catalyses the reaction dGDP + ATP = dGTP + ADP. The enzyme catalyses dTDP + ATP = dTTP + ADP. It carries out the reaction dADP + GTP = dATP + GDP. Broad-specificity nucleoside phosphate kinase involved in cellular nucleotide homeostasis by catalyzing nucleoside-phosphate interconversions. Similar to other adenylate kinases, preferentially catalyzes the phosphorylation of the nucleoside monophosphate AMP with ATP as phosphate donor to produce ADP. In vitro, can also catalyze the phosphorylation of CMP, dAMP and dCMP and use GTP as an alternate phosphate donor. Moreover, exhibits a diphosphate kinase activity, producing ATP, CTP, GTP, UTP, TTP, dATP, dCTP and dGTP from the corresponding diphosphate substrates with either ATP or GTP as phosphate donors. For this activity shows the following substrate preference CDP &gt; UDP &gt; ADP &gt; TDP. The sequence is that of Adenylate kinase 9 from Homo sapiens (Human).